The sequence spans 530 residues: NADH-quinone oxidoreductase subunit C/D (530 aa).

Residues methionine 1 to threonine 144 are NADH dehydrogenase I subunit C. The segment at glutamate 171–arginine 530 is NADH dehydrogenase I subunit D.

In the N-terminal section; belongs to the complex I 30 kDa subunit family. This sequence in the C-terminal section; belongs to the complex I 49 kDa subunit family. NDH-1 is composed of 13 different subunits. Subunits NuoB, CD, E, F, and G constitute the peripheral sector of the complex.

The protein localises to the cell inner membrane. It carries out the reaction a quinone + NADH + 5 H(+)(in) = a quinol + NAD(+) + 4 H(+)(out). In terms of biological role, NDH-1 shuttles electrons from NADH, via FMN and iron-sulfur (Fe-S) centers, to quinones in the respiratory chain. The immediate electron acceptor for the enzyme in this species is believed to be a menaquinone. Couples the redox reaction to proton translocation (for every two electrons transferred, four hydrogen ions are translocated across the cytoplasmic membrane), and thus conserves the redox energy in a proton gradient. The protein is NADH-quinone oxidoreductase subunit C/D of Bacteroides fragilis (strain ATCC 25285 / DSM 2151 / CCUG 4856 / JCM 11019 / LMG 10263 / NCTC 9343 / Onslow / VPI 2553 / EN-2).